Reading from the N-terminus, the 341-residue chain is Cyclic GMP-AMP synthase-like receptor (341 aa).

ATP is bound by residues Ser-64 and 77–79 (EFD). Mg(2+) contacts are provided by Glu-77, Asp-79, and Asp-172. Asp-172 is a GTP binding site. Residues Lys-230 and 246 to 250 (SYHIK) contribute to the ATP site. Position 258 (Glu-258) interacts with Mn(2+).

It belongs to the mab-21 family. Requires Mg(2+) as cofactor. Mn(2+) is required as a cofactor.

The enzyme catalyses GTP + ATP = 2',3'-cGAMP + 2 diphosphate. The catalysed reaction is GTP + ATP = pppGp(2'-5')A + diphosphate. It carries out the reaction pppGp(2'-5')A = 2',3'-cGAMP + diphosphate. Nucleotidyltransferase that catalyzes the formation of cyclic GMP-AMP (2',3'-cGAMP) from ATP and GTP and plays a key role in innate immunity. Acts as a key sensor of double-stranded RNA (dsRNA), the presence of dsRNA in the cytoplasm being a danger signal that triggers the immune responses. Directly binds dsRNA, activating the nucleotidyltransferase activity, leading to synthesis of 2',3'-cGAMP, a second messenger that binds to and activates Sting, thereby triggering the immune response via activation of the NF-kappa-B transcription factor. This is Cyclic GMP-AMP synthase-like receptor from Hydra vulgaris (Hydra).